The sequence spans 457 residues: Oxygen-independent coproporphyrinogen III oxidase (457 aa).

A Radical SAM core domain is found at 47 to 279 (LKNPMPLSLY…EILESLISFL (233 aa)). Y56 lines the S-adenosyl-L-methionine pocket. [4Fe-4S] cluster is bound by residues C62 and C66. F68 is an S-adenosyl-L-methionine binding site. Position 69 (C69) interacts with [4Fe-4S] cluster. Residues G113, 114–115 (GT), E147, Q174, R186, D211, A245, and I331 each bind S-adenosyl-L-methionine.

It belongs to the anaerobic coproporphyrinogen-III oxidase family. In terms of assembly, monomer. The cofactor is [4Fe-4S] cluster.

The protein localises to the cytoplasm. It carries out the reaction coproporphyrinogen III + 2 S-adenosyl-L-methionine = protoporphyrinogen IX + 2 5'-deoxyadenosine + 2 L-methionine + 2 CO2. It functions in the pathway porphyrin-containing compound metabolism; protoporphyrin-IX biosynthesis; protoporphyrinogen-IX from coproporphyrinogen-III (AdoMet route): step 1/1. Functionally, involved in the heme biosynthesis. Catalyzes the anaerobic oxidative decarboxylation of propionate groups of rings A and B of coproporphyrinogen III to yield the vinyl groups in protoporphyrinogen IX. This chain is Oxygen-independent coproporphyrinogen III oxidase (hemN), found in Helicobacter pylori (strain ATCC 700392 / 26695) (Campylobacter pylori).